A 158-amino-acid polypeptide reads, in one-letter code: Glutathione peroxidase homolog BsaA (158 aa).

Thr-36 is a catalytic residue.

The protein belongs to the glutathione peroxidase family.

The polypeptide is Glutathione peroxidase homolog BsaA (bsaA) (Staphylococcus epidermidis (strain ATCC 35984 / DSM 28319 / BCRC 17069 / CCUG 31568 / BM 3577 / RP62A)).